The chain runs to 33 residues: Large ribosomal subunit protein uL24 (33 aa).

Belongs to the universal ribosomal protein uL24 family. Component of the large ribosomal subunit.

The protein resides in the cytoplasm. In terms of biological role, component of the large ribosomal subunit. The ribosome is a large ribonucleoprotein complex responsible for the synthesis of proteins in the cell. The sequence is that of Large ribosomal subunit protein uL24 (rpl26) from Xenopus laevis (African clawed frog).